Reading from the N-terminus, the 261-residue chain is Putative ketoacyl reductase (261 aa).

Positions 15, 16, 18, 38, 39, 63, 64, 90, 157, 161, 190, and 192 each coordinate NADP(+). Tyr-157 acts as the Proton acceptor in catalysis.

The protein belongs to the short-chain dehydrogenases/reductases (SDR) family. In terms of assembly, homotetramer.

It functions in the pathway antibiotic biosynthesis; actinorhodin biosynthesis. The protein is Putative ketoacyl reductase (actIII) of Streptomyces coelicolor (strain ATCC BAA-471 / A3(2) / M145).